A 204-amino-acid polypeptide reads, in one-letter code: NADH-quinone oxidoreductase subunit C (204 aa).

The protein belongs to the complex I 30 kDa subunit family. As to quaternary structure, NDH-1 is composed of 14 different subunits. Subunits NuoB, C, D, E, F, and G constitute the peripheral sector of the complex.

Its subcellular location is the cell inner membrane. The enzyme catalyses a quinone + NADH + 5 H(+)(in) = a quinol + NAD(+) + 4 H(+)(out). NDH-1 shuttles electrons from NADH, via FMN and iron-sulfur (Fe-S) centers, to quinones in the respiratory chain. The immediate electron acceptor for the enzyme in this species is believed to be ubiquinone. Couples the redox reaction to proton translocation (for every two electrons transferred, four hydrogen ions are translocated across the cytoplasmic membrane), and thus conserves the redox energy in a proton gradient. In Vesicomyosocius okutanii subsp. Calyptogena okutanii (strain HA), this protein is NADH-quinone oxidoreductase subunit C.